Consider the following 285-residue polypeptide: Urease accessory protein UreD (285 aa).

The protein belongs to the UreD family. In terms of assembly, ureD, UreF and UreG form a complex that acts as a GTP-hydrolysis-dependent molecular chaperone, activating the urease apoprotein by helping to assemble the nickel containing metallocenter of UreC. The UreE protein probably delivers the nickel.

It localises to the cytoplasm. Functionally, required for maturation of urease via the functional incorporation of the urease nickel metallocenter. This is Urease accessory protein UreD from Azoarcus sp. (strain BH72).